The following is a 427-amino-acid chain: Homeotic protein caudal (427 aa).

The disordered stretch occupies residues 104–273; it reads QLMQQHHHHH…QPQPGKTRTK (170 aa). Low complexity predominate over residues 116–129; the sequence is ASSSSASSGSSSSG. Residues 145-164 show a composition bias toward gly residues; it reads GVGGAGGGGGVGGATDGGPG. A compositionally biased stretch (polar residues) spans 183 to 195; sequence ITVSGSEISSPGA. Positions 209–243 are enriched in low complexity; the sequence is HLSAVANNNNNNNNNNNSPSTHNNNNNNNSVSNNN. T245 is modified (phosphothreonine). The Antp-type hexapeptide motif lies at 252-257; that stretch reads YFDWMK. Positions 273–332 form a DNA-binding region, homeobox; it reads KDKYRVVYTDFQRLELEKEYCTSRYITIRRKSELAQTLSLSERQVKIWFQNRRAKERKQN.

This sequence belongs to the Caudal homeobox family. Maternally localized in an anteroposterior gradient in the syncytial blastoderm. Also expressed in the pole cells. Zygotically localized in the primordia of the terminal abdominal segment, the hindgut and in the posterior midgut rudiment. Expressed in the gut, the gonads and parts of the genital disks of third instar larvae (at protein level).

The protein resides in the nucleus. Caudal (cad) is one of a number of transcription factors controlling segmentation of the embryo. Further transcriptional regulation via a 5' flanking region containing DNA replication-related elements (DRE) and by dref also regulated by trh and tgo via the CNS midline element. Alongside Bicoid (bcd), caudal forms concentration gradients down the anterior-posterior (A-P) axis providing positional information and subsequent induction of the gap genes. Plays a role in gastrulation/germ band extension, hindgut morphogenesis, positive regulation of cell proliferation, genital disk development and pattern formation. Acts as a key regulator of the Hox gene network and activates transcription via the downstream core promoter element (DPE) relative to the TATA box. Plays a role in the establishment of the hindgut and in the invagination of the hindgut primordium during gastrulation. These effects on the gut are achieved by acting combinatorially at the posterior of the embryo to activate transcription of different targets including fog, fkh and wg. Caudal is involved in regulation of proliferation through transactivation of the E2F gene. Postembryonically its function is mostly restricted to the intestine where it regulates antimicrobial peptide (AMP) levels preserving the normal gut flora. The polypeptide is Homeotic protein caudal (cad) (Drosophila melanogaster (Fruit fly)).